Here is a 272-residue protein sequence, read N- to C-terminus: Protein FAM210A (272 aa).

Residues 117–229 (DKSISLYQRF…GYMSTPPPVK (113 aa)) enclose the DUF1279 domain. The chain crosses the membrane as a helical span at residues 136–156 (VLIPVHLITSGVWFGTFYYAA). Residues 229-271 (KEYLQDRMEETKELITEKMEETKDRLTEKLQETKEKVSFKKKV) are a coiled coil. The tract at residues 246-272 (KMEETKDRLTEKLQETKEKVSFKKKVE) is disordered.

This sequence belongs to the FAM210 family. Interacts with ATAD3A.

The protein localises to the membrane. The protein resides in the mitochondrion. It is found in the cytoplasm. In terms of biological role, may play a role in the structure and strength of both muscle and bone. In Homo sapiens (Human), this protein is Protein FAM210A (FAM210A).